The sequence spans 395 residues: Enoyl-[acyl-carrier-protein] reductase [NADH] (395 aa).

Residues 48–53 (GASTGY), 74–75 (FE), 111–112 (DA), and 139–140 (LA) each bind NAD(+). Tyr-225 lines the substrate pocket. Tyr-235 functions as the Proton donor in the catalytic mechanism. NAD(+)-binding positions include Lys-244 and 273–275 (LVT).

It belongs to the TER reductase family. As to quaternary structure, monomer.

It carries out the reaction a 2,3-saturated acyl-[ACP] + NAD(+) = a (2E)-enoyl-[ACP] + NADH + H(+). It functions in the pathway lipid metabolism; fatty acid biosynthesis. Functionally, involved in the final reduction of the elongation cycle of fatty acid synthesis (FAS II). Catalyzes the reduction of a carbon-carbon double bond in an enoyl moiety that is covalently linked to an acyl carrier protein (ACP). This is Enoyl-[acyl-carrier-protein] reductase [NADH] from Saccharophagus degradans (strain 2-40 / ATCC 43961 / DSM 17024).